A 589-amino-acid polypeptide reads, in one-letter code: Serine/threonine-protein kinase STE7 homolog (589 aa).

Basic and acidic residues predominate over residues 1–18 (MTRTTRIDTQEATKHKDL). Disordered stretches follow at residues 1-162 (MTRT…DPDN) and 185-233 (RQHY…ASSQ). Residues 24–33 (PLSLSSNPNP) show a composition bias toward low complexity. The span at 57–69 (VKSTSGSLRSSDM) shows a compositional bias: polar residues. Residues 92-121 (PTASSSATSTPTSNITGSSSASSIQFAQKS) are compositionally biased toward low complexity. 2 stretches are compositionally biased toward polar residues: residues 127–136 (IVSQTLSRPS) and 144–162 (SGYSSLNVNQSNRNVDPDN). Residues 185-203 (RQHYQNSHHHLPTTNRKRQ) are compositionally biased toward basic residues. Low complexity predominate over residues 206–220 (ISSISPTKSSAASSS). Residues 221 to 233 (LEPQIQSLPASSQ) show a composition bias toward polar residues. The Protein kinase domain maps to 249-565 (LLTLKQLGSG…QLLEDKEHFF (317 aa)). Residues 255–263 (LGSGNSGSV) and lysine 278 contribute to the ATP site. Residue aspartate 374 is the Proton acceptor of the active site. A Phosphoserine modification is found at serine 402. Phosphothreonine is present on threonine 408. The tract at residues 473–499 (IAAERNGQNSPSRSRKNKQKGNGYNSY) is disordered.

Belongs to the protein kinase superfamily. STE Ser/Thr protein kinase family. MAP kinase kinase subfamily.

The enzyme catalyses L-seryl-[protein] + ATP = O-phospho-L-seryl-[protein] + ADP + H(+). The catalysed reaction is L-threonyl-[protein] + ATP = O-phospho-L-threonyl-[protein] + ADP + H(+). It catalyses the reaction L-tyrosyl-[protein] + ATP = O-phospho-L-tyrosyl-[protein] + ADP + H(+). The polypeptide is Serine/threonine-protein kinase STE7 homolog (HST7) (Candida albicans (strain SC5314 / ATCC MYA-2876) (Yeast)).